Here is a 235-residue protein sequence, read N- to C-terminus: Phosphoribosylaminoimidazole-succinocarboxamide synthase (235 aa).

This sequence belongs to the SAICAR synthetase family.

The catalysed reaction is 5-amino-1-(5-phospho-D-ribosyl)imidazole-4-carboxylate + L-aspartate + ATP = (2S)-2-[5-amino-1-(5-phospho-beta-D-ribosyl)imidazole-4-carboxamido]succinate + ADP + phosphate + 2 H(+). Its pathway is purine metabolism; IMP biosynthesis via de novo pathway; 5-amino-1-(5-phospho-D-ribosyl)imidazole-4-carboxamide from 5-amino-1-(5-phospho-D-ribosyl)imidazole-4-carboxylate: step 1/2. The polypeptide is Phosphoribosylaminoimidazole-succinocarboxamide synthase (Streptococcus sanguinis (strain SK36)).